The sequence spans 431 residues: Tol-Pal system protein TolB (431 aa).

Positions 1–26 (MSLMTKLGFRALVASCLIAAGSAANA) are cleaved as a signal peptide. A disordered region spans residues 411–431 (PQILSVQGGSVREPSWGPFMQ).

This sequence belongs to the TolB family. As to quaternary structure, the Tol-Pal system is composed of five core proteins: the inner membrane proteins TolA, TolQ and TolR, the periplasmic protein TolB and the outer membrane protein Pal. They form a network linking the inner and outer membranes and the peptidoglycan layer.

It is found in the periplasm. Its function is as follows. Part of the Tol-Pal system, which plays a role in outer membrane invagination during cell division and is important for maintaining outer membrane integrity. The polypeptide is Tol-Pal system protein TolB (Burkholderia multivorans (strain ATCC 17616 / 249)).